Reading from the N-terminus, the 640-residue chain is tRNA uridine 5-carboxymethylaminomethyl modification enzyme MnmG (640 aa).

9–14 provides a ligand contact to FAD; it reads GGGHAG. 289 to 303 is a binding site for NAD(+); sequence GPRYCPSIEDKINKF.

The protein belongs to the MnmG family. In terms of assembly, homodimer. Heterotetramer of two MnmE and two MnmG subunits. The cofactor is FAD.

The protein resides in the cytoplasm. Its function is as follows. NAD-binding protein involved in the addition of a carboxymethylaminomethyl (cmnm) group at the wobble position (U34) of certain tRNAs, forming tRNA-cmnm(5)s(2)U34. The polypeptide is tRNA uridine 5-carboxymethylaminomethyl modification enzyme MnmG (Campylobacter hominis (strain ATCC BAA-381 / DSM 21671 / CCUG 45161 / LMG 19568 / NCTC 13146 / CH001A)).